Here is a 327-residue protein sequence, read N- to C-terminus: Zinc finger C2HC domain-containing protein 1A (327 aa).

Residues 13-42 form a C2HC/C3H-type 1 zinc finger; sequence ELVPCKICGRSFFPKVLKKHVPICQKTAAK. Zn(2+)-binding residues include Cys-17, Cys-20, His-32, and Cys-36. 2 disordered regions span residues 40-96 and 108-131; these read AAKR…KHEE and NQVIKDGGPLPPPPPPSYDPDYIQ. Basic and acidic residues predominate over residues 46-56; it reads VFDSGRQRAEG. Residues 63-76 show a composition bias toward low complexity; that stretch reads KPIKPKLQSSSSSS. The segment covering 116–125 has biased composition (pro residues); that stretch reads PLPPPPPPSY. The C2HC/C3H-type 2 zinc-finger motif lies at 128 to 157; that stretch reads DYIQCPYCQRRFGENAADRHIKFCKEQASR. Zn(2+) contacts are provided by Cys-132, Cys-135, His-147, and Cys-151. The interval 154–271 is disordered; that stretch reads QASRISNKSK…NPSTGIGMNK (118 aa). Polar residues predominate over residues 187–199; that stretch reads NSPTASSVSSRLP. Low complexity predominate over residues 211–229; the sequence is GIPSSKPSSTGSIKSTPSG. Composition is skewed to polar residues over residues 233–245 and 255–267; these read LRNNSSSLTSPPS and VSQSSLRNPSTGI.

It belongs to the ZC2HC1 family. The cofactor is Zn(2+).

The sequence is that of Zinc finger C2HC domain-containing protein 1A (zc2hc1a) from Danio rerio (Zebrafish).